The primary structure comprises 938 residues: Kexin (938 aa).

The first 20 residues, 1-20, serve as a signal peptide directing secretion; the sequence is MLPIKLLIFILGYLLSPTLQ. N-linked (GlcNAc...) asparagine glycosylation is found at N41 and N193. Residues 179 to 489 form the Peptidase S8 domain; the sequence is QWHLINLKYP…YGKTDAYKMV (311 aa). Catalysis depends on charge relay system residues D213 and H251. Cystine bridges form between C267–C414 and C359–C389. S422 functions as the Charge relay system in the catalytic mechanism. N-linked (GlcNAc...) asparagine glycans are attached at residues N441, N512, N539, and N599. Residues 498–647 enclose the P/Homo B domain; the sequence is VKPQAWYYSD…QFRIFGESID (150 aa). Positions 671-768 are disordered; that stretch reads EKQNSKSTTT…DNDNDNGNKK (98 aa). The span at 677 to 691 shows a compositional bias: low complexity; it reads STTTTSSTTTATTTS. The segment covering 711–735 has biased composition (polar residues); the sequence is KVDNSASITTSQTASLTSSNEQHQP. Positions 740 to 762 are enriched in acidic residues; that stretch reads SDSDSDTDDENKQEGEEDNDNDN. A helical membrane pass occupies residues 775 to 795; sequence GFYLMSIAVVGFIAVLLVMKF. Residues 796–924 are Cytoplasmic-facing; the sequence is HKTPGSGRRR…SGTSTKKYKD (129 aa). Over residues 798 to 808 the composition is skewed to basic residues; that stretch reads TPGSGRRRRRR. The segment at 798 to 938 is disordered; it reads TPGSGRRRRR…EDHKDVVGTQ (141 aa). Over residues 820 to 831 the composition is skewed to acidic residues; sequence DYSDSDDDEDDF. The span at 832–849 shows a compositional bias: basic and acidic residues; sequence DTRRADDDSFDLGHRNDQ. Positions 850-859 are enriched in low complexity; it reads RVVSASQQQR. A compositionally biased stretch (basic and acidic residues) spans 860 to 874; sequence QYDRQQDETRDRLFD. A compositionally biased stretch (polar residues) spans 902–919; it reads QQSAKAPSNSEGNSGTST. A compositionally biased stretch (basic and acidic residues) spans 921–938; it reads KYKDNEADEDHKDVVGTQ.

The protein belongs to the peptidase S8 family. Furin subfamily. The cofactor is Ca(2+). O-glycosylated.

It is found in the golgi apparatus. It localises to the trans-Golgi network membrane. The catalysed reaction is Cleavage of -Lys-Arg-|-Xaa- and -Arg-Arg-|-Xaa- bonds to process yeast alpha-factor pheromone and killer toxin precursors.. The polypeptide is Kexin (KEX2) (Candida albicans (strain WO-1) (Yeast)).